We begin with the raw amino-acid sequence, 360 residues long: Serine/threonine-protein kinase SAPK4 (360 aa).

Positions 4–260 constitute a Protein kinase domain; that stretch reads YEAVRDIGSG…MKEIKSHPWF (257 aa). ATP is bound by residues 10–18 and lysine 33; that span reads IGSGNFGVA. The active-site Proton acceptor is aspartate 123. The disordered stretch occupies residues 303–360; that stretch reads TMPKSSRTGYWSDAGSDEEEKEEEERPEENEEEEEDEYDKRVKEVHASGELRMSSLRI. Residues 317–339 show a composition bias toward acidic residues; sequence GSDEEEKEEEERPEENEEEEEDE. A compositionally biased stretch (basic and acidic residues) spans 340–351; sequence YDKRVKEVHASG.

Belongs to the protein kinase superfamily. Ser/Thr protein kinase family. May be phosphorylated. Expressed in leaf blades, leaf sheaths and roots. Expressed in shoots and roots of young seedlings.

The catalysed reaction is L-seryl-[protein] + ATP = O-phospho-L-seryl-[protein] + ADP + H(+). It carries out the reaction L-threonyl-[protein] + ATP = O-phospho-L-threonyl-[protein] + ADP + H(+). With respect to regulation, activated by hyperosmotic stress. May play a role in signal transduction of hyperosmotic response. The protein is Serine/threonine-protein kinase SAPK4 (SAPK4) of Oryza sativa subsp. japonica (Rice).